The chain runs to 167 residues: Gametocyte-specific factor 1 (167 aa).

S8 bears the Phosphoserine mark. 2 consecutive CHHC U11-48K-type zinc fingers follow at residues 14–41 (LLQC…RKNH) and 48–75 (LATC…DDRS). The Zn(2+) site is built by C17, H23, H33, C37, C51, H57, H67, and C71.

It belongs to the UPF0224 (FAM112) family.

The protein resides in the cytoplasm. In terms of biological role, required for spermatogenesis and is involved in the suppression of retrotransposon transcription in male germ cells. In Homo sapiens (Human), this protein is Gametocyte-specific factor 1 (GTSF1).